A 360-amino-acid chain; its full sequence is Peptide chain release factor 1 (360 aa).

Glutamine 235 is modified (N5-methylglutamine). A disordered region spans residues 281–310 (AERQRQDAAQAESRRLQVGSGDRSQRIRTY).

It belongs to the prokaryotic/mitochondrial release factor family. Post-translationally, methylated by PrmC. Methylation increases the termination efficiency of RF1.

It is found in the cytoplasm. Peptide chain release factor 1 directs the termination of translation in response to the peptide chain termination codons UAG and UAA. The polypeptide is Peptide chain release factor 1 (Stenotrophomonas maltophilia (strain K279a)).